The primary structure comprises 159 residues: Transmembrane protein 42 (159 aa).

Helical transmembrane passes span 37–57, 59–79, 100–120, and 124–144; these read FWGVFNCLCAGAFGALAAASA, LAFGSEVSMGLCVLGIIVMAS, IASVTVTFSNILSSAFLGYVL, and CQEVLWWGGVFLILCGLTLIH.

Its subcellular location is the membrane. In Homo sapiens (Human), this protein is Transmembrane protein 42 (TMEM42).